The chain runs to 308 residues: 11-beta-hydroxysteroid dehydrogenase-like 2 (308 aa).

Residues 10 to 30 traverse the membrane as a helical; Signal-anchor for type II membrane protein segment; sequence FLLPPLTISFLVLFYPFYLFT. NADP(+)-binding positions include 53–79 and Asp-104; that span reads GASS…VARR. Substrate is bound at residue Ser-183. Residue Tyr-196 is the Proton acceptor of the active site. Residues 196–200 and Lys-200 each bind NADP(+); that span reads YSASK.

This sequence belongs to the short-chain dehydrogenases/reductases (SDR) family.

It localises to the membrane. This Arabidopsis thaliana (Mouse-ear cress) protein is 11-beta-hydroxysteroid dehydrogenase-like 2 (HSD2).